The following is a 507-amino-acid chain: MDPKLGRMAASLLAVLLLLLERGMFSSPSPPPALLEKVFQYIDLHQDEFVQTLKEWVAIESDSVQPVPRFRQELFRMMAVAADTLQRLGARVASVDMGPQQLPDGQSLPIPPVILAELGSDPTKGTVCFYGHLDVQPADRGDGWLTDPYVLTEVDGKLYGRGATDNKGPVLAWINAVSAFRALEQDLPVNIKFIIEGMEEAGSVALEELVEKEKDRFFSGVDYIVISDNLWISQRKPAITYGTRGNSYFMVEVKCRDQDFHSGTFGGILHEPMADLVALLGSLVDSSGHILVPGIYDEVVPLTEEEINTYKAIHLDLEEYRNSSRVEKFLFDTKEEILMHLWRYPSLSIHGIEGAFDEPGTKTVIPGRVIGKFSIRLVPHMNVSAVEKQVTRHLEDVFSKRNSSNKMVVSMTLGLHPWIANIDDTQYLAAKRAIRTVFGTEPDMIRDGSTIPIAKMFQEIVHKSVVLIPLGAVDDGEHSQNEKINRWNYIEGTKLFAAFFLEMAQLH.

The first 26 residues, 1–26 (MDPKLGRMAASLLAVLLLLLERGMFS), serve as a signal peptide directing secretion. H132 is a binding site for Zn(2+). The active site involves D134. Residue D165 participates in Zn(2+) binding. The active-site Proton acceptor is the E199. E200 serves as a coordination point for Zn(2+). At S219 the chain carries Phosphoserine. Residue D228 coordinates Zn(2+). N322 and N382 each carry an N-linked (GlcNAc...) asparagine glycan. Zn(2+) is bound at residue H478.

Belongs to the peptidase M20A family. In terms of assembly, homodimer. Zn(2+) is required as a cofactor. As to expression, found in serum and adult nervous central system. Absent in serum from patients with homocarnosinosis.

The protein localises to the secreted. It catalyses the reaction Preferential hydrolysis of the beta-Ala-|-His dipeptide (carnosine), and also anserine, Xaa-|-His dipeptides and other dipeptides including homocarnosine.. The catalysed reaction is carnosine + H2O = beta-alanine + L-histidine. The enzyme catalyses anserine + H2O = N(pros)-methyl-L-histidine + beta-alanine. It carries out the reaction L-alanyl-L-histidine + H2O = L-histidine + L-alanine. It catalyses the reaction glycyl-L-histidine + H2O = L-histidine + glycine. The catalysed reaction is L-homocarnosine + H2O = 4-aminobutanoate + L-histidine. Activated by cadmium ions. Inhibited by the metal chelator 1,10-o-phenantrolin. The inhibitory concentration 50% (IC(50)) is 5 uM. Catalyzes the peptide bond hydrolysis in Xaa-His dipeptides, displaying the highest activity toward carnosine (beta-alanyl-L-histidine) and anserine (beta-alanyl-3-methyl-histidine). The sequence is that of Beta-Ala-His dipeptidase from Homo sapiens (Human).